The sequence spans 196 residues: Large ribosomal subunit protein eL15 (196 aa).

Positions T155–K196 are disordered. A compositionally biased stretch (basic residues) spans K169–G178.

It belongs to the eukaryotic ribosomal protein eL15 family.

In Methanocella arvoryzae (strain DSM 22066 / NBRC 105507 / MRE50), this protein is Large ribosomal subunit protein eL15.